The sequence spans 78 residues: MKMKTKIFRVKGKFLMGDKLQPFTKELNAIREEEIYERLYSEFGSKHRVPRSKVKIEEIEEISPEEVQDPVVKALVQR.

It belongs to the eukaryotic ribosomal protein eL20 family. Part of the 50S ribosomal subunit. Binds 23S rRNA.

This is Large ribosomal subunit protein eL20 from Methanothermobacter thermautotrophicus (strain ATCC 29096 / DSM 1053 / JCM 10044 / NBRC 100330 / Delta H) (Methanobacterium thermoautotrophicum).